A 317-amino-acid polypeptide reads, in one-letter code: Ribosomal protein L11 methyltransferase (317 aa).

S-adenosyl-L-methionine is bound by residues Thr-158, Gly-179, Asp-201, and Asn-244.

Belongs to the methyltransferase superfamily. PrmA family.

It localises to the cytoplasm. The catalysed reaction is L-lysyl-[protein] + 3 S-adenosyl-L-methionine = N(6),N(6),N(6)-trimethyl-L-lysyl-[protein] + 3 S-adenosyl-L-homocysteine + 3 H(+). Methylates ribosomal protein L11. The sequence is that of Ribosomal protein L11 methyltransferase from Streptococcus pyogenes serotype M49 (strain NZ131).